We begin with the raw amino-acid sequence, 268 residues long: Zwei Ig domain protein zig-8 (268 aa).

The first 21 residues, Met-1–Gly-21, serve as a signal peptide directing secretion. 2 Ig-like C2-type domains span residues Pro-40 to Tyr-128 and Pro-140 to Thr-251. An intrachain disulfide couples Cys-57 to Cys-118. Residues Asn-82, Asn-155, Asn-164, and Asn-191 are each glycosylated (N-linked (GlcNAc...) asparagine). The cysteines at positions 165 and 226 are disulfide-linked.

As to expression, expressed in PVT neurons and pharyngeal muscles.

It localises to the secreted. Its function is as follows. Together with zig-5, required postembryonically to maintain the position of ASI and ASH head neuron cell bodies and ventral nerve cord axons of PVQ, PVP and HSN neurons by preventing their displacement that could occur during body growth and movement. May act by reducing L1CAM-like protein sax-7 (long isoform) adhesion. The protein is Zwei Ig domain protein zig-8 of Caenorhabditis elegans.